Reading from the N-terminus, the 2109-residue chain is Nonribosomal peptide synthetase sidE (2109 aa).

The tract at residues 31–512 is adenylation 1; sequence LTPPSPPCLV…QNGKVDFRAI (482 aa). The region spanning 537–613 is the Carrier 1 domain; that stretch reads AGLSETASKI…EIADTVQLDS (77 aa). Serine 574 bears the O-(pantetheine 4'-phosphoryl)serine mark. Residues 646–908 are condensation 1; sequence DAYPVTALQE…LAVVPYAIAI (263 aa). An adenylation 2 region spans residues 1058–1555; it reads RTLNGQFEAT…GKANRKQLKA (498 aa). The region spanning 1584–1660 is the Carrier 2 domain; it reads PLASETQKVL…AMADQLKGES (77 aa). The residue at position 1621 (serine 1621) is an O-(pantetheine 4'-phosphoryl)serine. The condensation 2 stretch occupies residues 1695–1968; sequence YPCPPGQAEF…NFLPMRSKVD (274 aa).

It belongs to the NRP synthetase family.

It functions in the pathway siderophore biosynthesis. Nonribosomal peptide synthetase; part of the siderophore biosynthetic pathway. Aspergillus fumigatus produces four types of siderophores, low-molecular-mass iron chelators, including excreted fusarinine C (FsC) and triacetylfusarinine C (TAFC) for iron uptake and intacellular ferricrocin (FC) for hyphal and hydroxyferricrocin (HFC) for conidial iron distribution and storage. TAFC consists of three N(2)-acetyl-N(5)-anhydromevalonyl-N(5)-hydroxyornithine residues cyclically linked by ester bonds; FC is a cyclic hexapeptide with the structure Gly-Ser-Gly-(N(5)-acetyl-N(5)-hydroxyornithine)x3. The biosynthesis of all four siderophores depends on the hydroxylation of ornithine, catalyzed by the monooxygenase sidA. Subsequently, the pathways for biosynthesis of extra- and intracellular siderophores split. For biosynthesis of extracellular siderophores, the transacylase sidF transfers anhydromevalonyl to N(5)-hydroxyornithine. The required anhydromevalonyl-CoA moiety is derived from mevalonate by CoA ligation and dehydration catalyzed by sidI and sidH respectively. The acetylation of N(5)-hydroxyornithine for FC biosynthesis involves the constitutively expressed sidL. FC is hydroxylated to HFC by an as yet uncharacterized enzyme during conidiation. Assembly of fusarinine C (FsC) and FC is catalyzed by two different nonribosomal peptide synthetases (NRPS), sidD and sidC respectively. Subsequently, sidG catalyzes N2-acetylation of FsC for forming TAFC. Both extra- and intracellular siderophores are crucial for growth during iron limitation and virulence. This Aspergillus fumigatus (strain ATCC MYA-4609 / CBS 101355 / FGSC A1100 / Af293) (Neosartorya fumigata) protein is Nonribosomal peptide synthetase sidE.